An 80-amino-acid chain; its full sequence is Exodeoxyribonuclease 7 small subunit (80 aa).

Belongs to the XseB family. In terms of assembly, heterooligomer composed of large and small subunits.

Its subcellular location is the cytoplasm. The catalysed reaction is Exonucleolytic cleavage in either 5'- to 3'- or 3'- to 5'-direction to yield nucleoside 5'-phosphates.. Functionally, bidirectionally degrades single-stranded DNA into large acid-insoluble oligonucleotides, which are then degraded further into small acid-soluble oligonucleotides. This Oleidesulfovibrio alaskensis (strain ATCC BAA-1058 / DSM 17464 / G20) (Desulfovibrio alaskensis) protein is Exodeoxyribonuclease 7 small subunit.